Consider the following 152-residue polypeptide: 3-hydroxyacyl-[acyl-carrier-protein] dehydratase FabZ (152 aa).

Residue His58 is part of the active site.

The protein belongs to the thioester dehydratase family. FabZ subfamily.

It is found in the cytoplasm. It carries out the reaction a (3R)-hydroxyacyl-[ACP] = a (2E)-enoyl-[ACP] + H2O. Functionally, involved in unsaturated fatty acids biosynthesis. Catalyzes the dehydration of short chain beta-hydroxyacyl-ACPs and long chain saturated and unsaturated beta-hydroxyacyl-ACPs. The sequence is that of 3-hydroxyacyl-[acyl-carrier-protein] dehydratase FabZ from Synechococcus sp. (strain RCC307).